The following is a 22-amino-acid chain: thr operon leader peptide (22 aa).

It belongs to the thr operon leader peptide family.

Functionally, this protein is involved in control of the biosynthesis of threonine. This is thr operon leader peptide from Klebsiella pneumoniae (strain 342).